We begin with the raw amino-acid sequence, 224 residues long: MELYETSPYFYQEPHFYDGENYLPVHLQGFEPPGYERAELSLSPEARVPLEDKGLGPAEHCPGQCLPWACKVCKRKSVSVDRRRAATLREKRRLKKVNEAFEALKRSTLLNPNQRLPKVEILRSAIQYIERLQALLSSLNQEERDLRYRGGGGPQAAVPSECSSHSASCSPQWGSALEFGPNPGDHLLPADPTDAHNLHSLTSIVDSITVEDVAAAFPDETIPN.

2 positions are modified to phosphoserine; by CaMK2G: serine 77 and serine 79. A bHLH domain is found at 81 to 132 (DRRRAATLREKRRLKKVNEAFEALKRSTLLNPNQRLPKVEILRSAIQYIERL). Threonine 87 is modified (phosphothreonine; by CaMK2G).

Homodimer and heterodimer with E12; heterodimerization enhances MYOG DNA-binding and transcriptional activities. Interacts with SMARCA4/BRG1/BAF190A. Interacts (via C-terminal region) with SSRP1 and SUPT16H; the interaction is indicative of an interaction with the FACT complex. Interacts with CSRP3. In terms of processing, phosphorylated by CAMK2G on threonine and serine amino acids in a muscle activity-dependent manner. Phosphorylation of Thr-87 impairs both DNA-binding and trans-activation functions in contracting muscles.

The protein resides in the nucleus. Functionally, acts as a transcriptional activator that promotes transcription of muscle-specific target genes and plays a role in muscle differentiation, cell cycle exit and muscle atrophy. Essential for the development of functional embryonic skeletal fiber muscle differentiation. However is dispensable for postnatal skeletal muscle growth; phosphorylation by CAMK2G inhibits its transcriptional activity in respons to muscle activity. Required for the recruitment of the FACT complex to muscle-specific promoter regions, thus promoting gene expression initiation. During terminal myoblast differentiation, plays a role as a strong activator of transcription at loci with an open chromatin structure previously initiated by MYOD1. Together with MYF5 and MYOD1, co-occupies muscle-specific gene promoter core regions during myogenesis. Also cooperates with myocyte-specific enhancer factor MEF2D and BRG1-dependent recruitment of SWI/SNF chromatin-remodeling enzymes to alter chromatin structure at myogenic late gene promoters. Facilitates cell cycle exit during terminal muscle differentiation through the up-regulation of miR-20a expression, which in turn represses genes involved in cell cycle progression. Binds to the E-box containing (E1) promoter region of the miR-20a gene. Also plays a role in preventing reversal of muscle cell differentiation. Contributes to the atrophy-related gene expression in adult denervated muscles. Induces fibroblasts to differentiate into myoblasts. The protein is Myogenin (MYOG) of Bos taurus (Bovine).